Reading from the N-terminus, the 110-residue chain is Large ribosomal subunit protein P2B (110 aa).

Positions 73-88 (TPAAGGAAGAEATSAA) are enriched in low complexity. The disordered stretch occupies residues 73–110 (TPAAGGAAGAEATSAAEEAKEEEAAEESDEDMGFGLFD). The segment covering 91-104 (AKEEEAAEESDEDM) has biased composition (acidic residues). Ser-100 carries the post-translational modification Phosphoserine.

Belongs to the eukaryotic ribosomal protein P1/P2 family. In terms of assembly, component of the large ribosomal subunit (LSU). Mature yeast ribosomes consist of a small (40S) and a large (60S) subunit. The 40S small subunit contains 1 molecule of ribosomal RNA (18S rRNA) and at least 33 different proteins. The large 60S subunit contains 3 rRNA molecules (25S, 5.8S and 5S rRNA) and at least 46 different proteins. The acidic ribosomal P-proteins form the stalk structure of the 60S subunit. They are organized as a pentameric complex in which uL10/P0 interacts with 2 heterodimers of P1 and P2 proteins.

The protein localises to the cytoplasm. Its function is as follows. Component of the ribosome, a large ribonucleoprotein complex responsible for the synthesis of proteins in the cell. The small ribosomal subunit (SSU) binds messenger RNAs (mRNAs) and translates the encoded message by selecting cognate aminoacyl-transfer RNA (tRNA) molecules. The large subunit (LSU) contains the ribosomal catalytic site termed the peptidyl transferase center (PTC), which catalyzes the formation of peptide bonds, thereby polymerizing the amino acids delivered by tRNAs into a polypeptide chain. The nascent polypeptides leave the ribosome through a tunnel in the LSU and interact with protein factors that function in enzymatic processing, targeting, and the membrane insertion of nascent chains at the exit of the ribosomal tunnel. The chain is Large ribosomal subunit protein P2B (rpp202) from Schizosaccharomyces pombe (strain 972 / ATCC 24843) (Fission yeast).